The sequence spans 156 residues: Myosin regulatory light chain, striated adductor muscle (156 aa).

Position 1 is a blocked amino end (Ala) (Ala-1). EF-hand domains follow at residues 15 to 50 and 84 to 119; these read KQIQEMKEAFSMIDVDRDGFVNKDDLKAISEQLGRT and DTEETLRNAFAMFDELDTKKLNIEYIKDLLENMGDN. Residues Asp-28, Asp-30, Asp-32, and Asp-39 each coordinate Ca(2+).

In terms of biological role, in molluscan muscle, calcium regulation is associated with myosin rather than with actin. Muscle myosin contains two types of light chains: the catalytic light chain, essential for ATPase activity, and the regulatory light chain, a calcium-binding protein responsible for Ca(2+) dependent binding and Ca(2+) dependent Mg-ATPase activity. The polypeptide is Myosin regulatory light chain, striated adductor muscle (Mizuhopecten yessoensis (Japanese scallop)).